The sequence spans 127 residues: Aspartate 1-decarboxylase (127 aa).

Ser-25 functions as the Schiff-base intermediate with substrate; via pyruvic acid in the catalytic mechanism. Ser-25 carries the pyruvic acid (Ser) modification. Thr-57 provides a ligand contact to substrate. Tyr-58 acts as the Proton donor in catalysis. Substrate is bound at residue 73–75 (GAA).

It belongs to the PanD family. In terms of assembly, heterooctamer of four alpha and four beta subunits. The cofactor is pyruvate. In terms of processing, is synthesized initially as an inactive proenzyme, which is activated by self-cleavage at a specific serine bond to produce a beta-subunit with a hydroxyl group at its C-terminus and an alpha-subunit with a pyruvoyl group at its N-terminus.

Its subcellular location is the cytoplasm. The enzyme catalyses L-aspartate + H(+) = beta-alanine + CO2. It participates in cofactor biosynthesis; (R)-pantothenate biosynthesis; beta-alanine from L-aspartate: step 1/1. In terms of biological role, catalyzes the pyruvoyl-dependent decarboxylation of aspartate to produce beta-alanine. This chain is Aspartate 1-decarboxylase, found in Exiguobacterium sibiricum (strain DSM 17290 / CCUG 55495 / CIP 109462 / JCM 13490 / 255-15).